The chain runs to 293 residues: Ribosomal RNA small subunit methyltransferase H (293 aa).

Residues 31 to 33, aspartate 49, phenylalanine 76, aspartate 97, and glutamine 104 contribute to the S-adenosyl-L-methionine site; that span reads GGY.

Belongs to the methyltransferase superfamily. RsmH family.

It is found in the cytoplasm. The enzyme catalyses cytidine(1402) in 16S rRNA + S-adenosyl-L-methionine = N(4)-methylcytidine(1402) in 16S rRNA + S-adenosyl-L-homocysteine + H(+). In terms of biological role, specifically methylates the N4 position of cytidine in position 1402 (C1402) of 16S rRNA. The sequence is that of Ribosomal RNA small subunit methyltransferase H from Wolbachia sp. subsp. Drosophila simulans (strain wRi).